The chain runs to 252 residues: Aquaporin TIP4-4 (252 aa).

Transmembrane regions (helical) follow at residues 20–40 (AVLAELILTFLFVFAGVGSAM) and 53–73 (VVGLTAVALAHTLVVAVMVSA). The NPA 1 signature appears at 83–85 (NPA). 3 helical membrane-spanning segments follow: residues 105–125 (VAAQLLGSTLACLLLAFLAVA), 143–163 (GVLMEAVLTFSLLFAVYATVV), and 168–188 (AVGGMGPLLVGLVVGANVLAG). Positions 197-199 (NPA) match the NPA 2 motif. Residues 216–236 (VYWVGPLIGGPLAGLVYDGLF) form a helical membrane-spanning segment.

Belongs to the MIP/aquaporin (TC 1.A.8) family. TIP (TC 1.A.8.10) subfamily.

It is found in the vacuole membrane. Functionally, aquaporins facilitate the transport of water and small neutral solutes across cell membranes. In Zea mays (Maize), this protein is Aquaporin TIP4-4 (TIP4-4).